The sequence spans 1659 residues: Daxx-like protein (1659 aa).

Disordered stretches follow at residues 1 to 25 (MSAS…RRRL) and 265 to 336 (QLQQ…VRSL). Residues 438–469 (LGQLQQEQQKILGQLQQQKQQQQQQQKKILGQ) adopt a coiled-coil conformation. 3 stretches are compositionally biased toward low complexity: residues 506–520 (SVGQ…QSQQ), 528–542 (KQQP…VGQF), and 600–625 (GQLQ…QQQQ). Disordered stretches follow at residues 506-542 (SVGQ…VGQF), 600-645 (GQLQ…TLAG), 658-713 (SAGQ…MPQK), 872-894 (TLPF…HVQG), 924-952 (LPPT…VQQQ), 1023-1060 (VESP…QSRA), and 1536-1555 (FKIA…EDDD). The segment covering 626-635 (KISAGQLQEH) has biased composition (polar residues). Composition is skewed to low complexity over residues 636-645 (SQQQQKTLAG) and 658-698 (SAGQ…QPQQ). Composition is skewed to polar residues over residues 699-711 (RTSA…QQMP) and 885-894 (APMTSTHVQG). The tract at residues 870-1659 (ARTLPFRSSQ…DQIIISDEES (790 aa)) is necessary for interaction with His3.3A and His3.3B. Residues 924–937 (LPPTTSITPQLTPT) show a composition bias toward low complexity. A compositionally biased stretch (acidic residues) spans 1541-1555 (DGDDSEEESDSEDDD).

Interacts with p53 (via C-terminus). Interacts (via C-terminus) with His3.3A and His3.3B. Interacts with asf1. As to expression, ubiquitously expressed with higher levels in the head (at protein level). Expressed in the germ line, with prominent expression in primary spermatocytes and meiotic spermatocytes (at protein level). In ovaries, expressed in nurse cells and in the germinal vesicle of the ovarian follicle at stage 10 (at protein level).

It is found in the cytoplasm. It localises to the cytosol. Its subcellular location is the nucleus. The protein localises to the chromosome. Its function is as follows. Transcription regulator. Acts as a histone chaperone that facilitates deposition of histone H3.3. Has a role in chromatin remodeling together with asf1 and XNP. Has role in the transcriptional apoptotic response to oxidative and UV stress. This Drosophila melanogaster (Fruit fly) protein is Daxx-like protein.